Here is a 119-residue protein sequence, read N- to C-terminus: Holo-[acyl-carrier-protein] synthase (119 aa).

Mg(2+) is bound by residues Asp-8 and Glu-60.

Belongs to the P-Pant transferase superfamily. AcpS family. Requires Mg(2+) as cofactor.

It localises to the cytoplasm. It catalyses the reaction apo-[ACP] + CoA = holo-[ACP] + adenosine 3',5'-bisphosphate + H(+). In terms of biological role, transfers the 4'-phosphopantetheine moiety from coenzyme A to a Ser of acyl-carrier-protein. The sequence is that of Holo-[acyl-carrier-protein] synthase from Mycoplasma pneumoniae (strain ATCC 29342 / M129 / Subtype 1) (Mycoplasmoides pneumoniae).